Consider the following 407-residue polypeptide: O-antigen polymerase (407 aa).

11 helical membrane passes run 2 to 22 (LIIS…TLSV), 31 to 51 (VMVP…GIFV), 63 to 83 (YLFF…SYLY), 101 to 121 (YVFT…PVLM), 141 to 161 (YGIY…CAFF), 168 to 185 (LFCI…FLHG), 190 to 204 (IFSI…LSYI), 211 to 231 (FMFL…FFAY), 319 to 339 (ADFG…KGVL), 356 to 376 (FIMF…GWLF), and 382 to 402 (IAFM…RFVL).

It localises to the cell inner membrane. The enzyme catalyses n lipid-linked O-antigen repeat units = a lipid-linked O antigen + (n-1) polyisoprenyl diphosphate.. It functions in the pathway bacterial outer membrane biogenesis; LPS O-antigen biosynthesis. In terms of biological role, polymerase involved in the biosynthesis of the lipopolysaccharide (LPS). Catalyzes the polymerization of the O-antigen repeat units on the periplasmic face of the inner membrane, leading to the formation of the lipid-linked O-antigen molecule. The sequence is that of O-antigen polymerase (rfc) from Salmonella typhi.